We begin with the raw amino-acid sequence, 1289 residues long: Ethylene-insensitive protein 2.1 (1289 aa).

Helical transmembrane passes span 18–38 (LLPA…PGKW), 48–68 (FGFD…LCQY), 96–116 (FLGV…ILGI), 128–148 (LSTC…FATL), and 155–175 (SFLC…GVLI). The N-linked (GlcNAc...) asparagine glycan is linked to Asn-185. Residues 199–219 (LMSLLGASIMPHNFFLHSAIV) traverse the membrane as a helical segment. An N-linked (GlcNAc...) asparagine glycan is attached at Asn-227. 7 consecutive transmembrane segments (helical) span residues 235–255 (LNHF…NFVL), 260–280 (ANVF…MSLM), 288–308 (VAPF…AFSW), 335–355 (IIAV…GIYQ), 356–376 (LLIL…IPLF), 393–413 (FLEF…IIFV), and 439–459 (YIVL…LAAT). Asn-521 carries N-linked (GlcNAc...) asparagine glycosylation. The tract at residues 611-659 (LHTEKEDDEGDNWEPEDSSKGVPGSTLSLTSDGPGSFRSLSGKSDAGGN) is disordered. Residues 616-626 (EDDEGDNWEPE) show a composition bias toward acidic residues. Residues 635-652 (STLSLTSDGPGSFRSLSG) show a composition bias toward polar residues. Residues Ser-646 and Ser-663 each carry the phosphoserine modification. N-linked (GlcNAc...) asparagine glycosylation occurs at Asn-745. Positions 792 to 816 (SIADSSERRYSGVRTPPSSDGWDNQ) are disordered. The span at 807-816 (PPSSDGWDNQ) shows a compositional bias: polar residues. Thr-819 bears the Phosphothreonine mark. The residue at position 923 (Ser-923) is a Phosphoserine. An N-linked (GlcNAc...) asparagine glycan is attached at Asn-1025. Residues 1208–1227 (HRSSPPASNGMLPPASKPGR) form a disordered region. The short motif at 1274–1281 (LKRYKRRL) is the Nuclear localization signal element.

It belongs to the NRAMP (TC 2.A.55) family.

The protein resides in the endoplasmic reticulum membrane. It localises to the nucleus. Its subcellular location is the cytoplasm. Central factor in signaling pathways regulated by ethylene (ET) and involved in various processes including development, plant defense, senescence, nucleotide sugar flux, and tropisms. Functionally, trafficking signal inducing ethylene response. The nuclear localization is both necessary and sufficient to activate EIN3-mediated transcription and ethylene responses. This chain is Ethylene-insensitive protein 2.1, found in Populus trichocarpa (Western balsam poplar).